A 218-amino-acid polypeptide reads, in one-letter code: Ribonuclease HII (218 aa).

The region spanning Arg-23–Val-216 is the RNase H type-2 domain. Residues Asp-29, Glu-30, and Asp-125 each contribute to the a divalent metal cation site.

Belongs to the RNase HII family. Mn(2+) is required as a cofactor. Requires Mg(2+) as cofactor.

It localises to the cytoplasm. The enzyme catalyses Endonucleolytic cleavage to 5'-phosphomonoester.. Endonuclease that specifically degrades the RNA of RNA-DNA hybrids. In Cupriavidus pinatubonensis (strain JMP 134 / LMG 1197) (Cupriavidus necator (strain JMP 134)), this protein is Ribonuclease HII.